Consider the following 367-residue polypeptide: Histone RNA hairpin-binding protein (367 aa).

A compositionally biased stretch (polar residues) spans 1–12 (MAQKTPTKGTRS). Disordered stretches follow at residues 1-24 (MAQKTPTKGTRSSPRKKAWGSPIK) and 49-200 (EVTE…HWEE). The span at 57–73 (LASRLEEERRCKSESRR) shows a compositional bias: basic and acidic residues. A compositionally biased stretch (polar residues) spans 147–156 (SNASTINEGA). Over residues 183–192 (SDSSSVASSP) the composition is skewed to low complexity. The segment at 206-275 (CTDEAVLKRR…KWKRSLYEYC (70 aa)) is RNA-binding. The interval 342–367 (MDESTLKASTNTDPSAPTDFSKMSSH) is disordered. A compositionally biased stretch (polar residues) spans 347 to 356 (LKASTNTDPS).

This sequence belongs to the SLBP family. In terms of processing, ubiquitinated by the CBC(fem-1) (Cul2-ElonginB-ElonginC) E3 ubiquitin-protein ligase complex, leading to its degradation.

Functionally, involved in histone pre-mRNA 3' processing. Required for chromosome condensation, progression of cell death and morphogenesis. In Caenorhabditis elegans, this protein is Histone RNA hairpin-binding protein (cdl-1).